The primary structure comprises 464 residues: Arylsulfatase (464 aa).

An N-terminal signal peptide occupies residues 1–20 (MNKKAMAAAVSMILAGGAHA). 3 residues coordinate Ca(2+): Asp34, Asp35, and Ser72. The active-site Nucleophile is the Ser72. At Ser72 the chain carries 3-oxoalanine (Ser). Residue His134 is part of the active site. Positions 329 and 330 each coordinate Ca(2+).

It belongs to the sulfatase family. Ca(2+) serves as cofactor. Post-translationally, the conversion to 3-oxoalanine (also known as C-formylglycine, FGly), of a serine or cysteine residue in prokaryotes and of a cysteine residue in eukaryotes, is critical for catalytic activity.

The protein localises to the periplasm. The catalysed reaction is an aryl sulfate + H2O = a phenol + sulfate + H(+). Its function is as follows. Plays an important role in the mineralization of sulfates. The chain is Arylsulfatase (atsA) from Klebsiella aerogenes (Enterobacter aerogenes).